The chain runs to 194 residues: dCTP deaminase (194 aa).

Residues 110 to 115 (RSSLAR), aspartate 128, 136 to 138 (VLE), tyrosine 171, lysine 178, and glutamine 182 each bind dCTP. Glutamate 138 serves as the catalytic Proton donor/acceptor.

This sequence belongs to the dCTP deaminase family. In terms of assembly, homotrimer.

It catalyses the reaction dCTP + H2O + H(+) = dUTP + NH4(+). It functions in the pathway pyrimidine metabolism; dUMP biosynthesis; dUMP from dCTP (dUTP route): step 1/2. Its function is as follows. Catalyzes the deamination of dCTP to dUTP. This is dCTP deaminase from Haemophilus ducreyi (strain 35000HP / ATCC 700724).